Here is a 149-residue protein sequence, read N- to C-terminus: Small ribosomal subunit protein uS13 (149 aa).

This sequence belongs to the universal ribosomal protein uS13 family. Part of the 30S ribosomal subunit. Forms a loose heterodimer with protein S19. Forms two bridges to the 50S subunit in the 70S ribosome.

Its function is as follows. Located at the top of the head of the 30S subunit, it contacts several helices of the 16S rRNA. In the 70S ribosome it contacts the 23S rRNA (bridge B1a) and protein L5 of the 50S subunit (bridge B1b), connecting the 2 subunits; these bridges are implicated in subunit movement. This is Small ribosomal subunit protein uS13 from Thermococcus kodakarensis (strain ATCC BAA-918 / JCM 12380 / KOD1) (Pyrococcus kodakaraensis (strain KOD1)).